We begin with the raw amino-acid sequence, 311 residues long: Pyrimidine-specific ribonucleoside hydrolase RihA (311 aa).

Histidine 240 is a catalytic residue.

It belongs to the IUNH family. RihA subfamily.

In terms of biological role, hydrolyzes with equal efficiency cytidine or uridine to ribose and cytosine or uracil, respectively. The polypeptide is Pyrimidine-specific ribonucleoside hydrolase RihA (Escherichia coli O81 (strain ED1a)).